The primary structure comprises 511 residues: Protoheme IX farnesyltransferase, mitochondrial (511 aa).

Residues 1–23 (MSSSTESLPGTLRRTLTTSRAPA) constitute a mitochondrion transit peptide. Disordered stretches follow at residues 1–27 (MSSSTESLPGTLRRTLTTSRAPAATSS) and 50–136 (HDSA…LAPD). Composition is skewed to low complexity over residues 52-79 (SASSQRSTTVASTTSTTADAADGSSSTT), 104-115 (RKAAAAAAAAAA), and 126-136 (PDAPTADLAPD). Transmembrane regions (helical) follow at residues 168–188 (LTVLVVLSAMVPYALYPVPSF), 197–217 (SLAPSLSPLTLLFLTTGTTLC), 253–273 (AAVLFAVGCGLAGTLALYFGV), 275–295 (PTVSFLGAANIALYAGAYTPL), 303–323 (TWVGAIVGGIPPLMGWAAAAG), 344–364 (LGGWLFAGLLFAWQFPHFMPL), 398–418 (AFIPLCVGLSATGVTEWSFAV), and 444–464 (ARGLFWASVWHLPVIMVLALA).

This sequence belongs to the UbiA prenyltransferase family.

It is found in the mitochondrion membrane. Functionally, converts protoheme IX and farnesyl diphosphate to heme O. The polypeptide is Protoheme IX farnesyltransferase, mitochondrial (pft-1) (Neurospora crassa (strain ATCC 24698 / 74-OR23-1A / CBS 708.71 / DSM 1257 / FGSC 987)).